Consider the following 340-residue polypeptide: Protein-arginine kinase (340 aa).

The 222-residue stretch at 21 to 242 folds into the Phosphagen kinase C-terminal domain; the sequence is VVLSSRIRLA…EQIIMQERVA (222 aa). Residues 24–28, His79, Arg113, 164–168, and 195–200 each bind ATP; these read SSRIR, RASVM, and RGIYGE.

This sequence belongs to the ATP:guanido phosphotransferase family.

The enzyme catalyses L-arginyl-[protein] + ATP = N(omega)-phospho-L-arginyl-[protein] + ADP + H(+). In terms of biological role, catalyzes the specific phosphorylation of arginine residues in proteins. This Listeria monocytogenes serovar 1/2a (strain ATCC BAA-679 / EGD-e) protein is Protein-arginine kinase.